Consider the following 155-residue polypeptide: Large ribosomal subunit protein eL24 (155 aa).

The disordered stretch occupies residues 119–155; that stretch reads VKAAKKAAAPAPAKKSAPKQKAAKVTQKAAPRVGGKR. Residues 124–133 are compositionally biased toward low complexity; it reads KAAAPAPAKK.

This sequence belongs to the eukaryotic ribosomal protein eL24 family.

The polypeptide is Large ribosomal subunit protein eL24 (RpL24) (Drosophila melanogaster (Fruit fly)).